The chain runs to 299 residues: Bifunctional protein FolD 1 (299 aa).

NADP(+) contacts are provided by residues 168-170 (GRS), serine 193, and isoleucine 234.

Belongs to the tetrahydrofolate dehydrogenase/cyclohydrolase family. Homodimer.

The catalysed reaction is (6R)-5,10-methylene-5,6,7,8-tetrahydrofolate + NADP(+) = (6R)-5,10-methenyltetrahydrofolate + NADPH. The enzyme catalyses (6R)-5,10-methenyltetrahydrofolate + H2O = (6R)-10-formyltetrahydrofolate + H(+). It participates in one-carbon metabolism; tetrahydrofolate interconversion. Functionally, catalyzes the oxidation of 5,10-methylenetetrahydrofolate to 5,10-methenyltetrahydrofolate and then the hydrolysis of 5,10-methenyltetrahydrofolate to 10-formyltetrahydrofolate. This is Bifunctional protein FolD 1 from Mesorhizobium japonicum (strain LMG 29417 / CECT 9101 / MAFF 303099) (Mesorhizobium loti (strain MAFF 303099)).